The primary structure comprises 217 residues: tRNA (guanine-N(7)-)-methyltransferase (217 aa).

4 residues coordinate S-adenosyl-L-methionine: Glu-44, Glu-69, Asp-96, and Asp-118. Asp-118 is an active-site residue. Residues Lys-122, Asp-154, and Thr-191–Glu-194 each bind substrate.

The protein belongs to the class I-like SAM-binding methyltransferase superfamily. TrmB family.

The catalysed reaction is guanosine(46) in tRNA + S-adenosyl-L-methionine = N(7)-methylguanosine(46) in tRNA + S-adenosyl-L-homocysteine. Its pathway is tRNA modification; N(7)-methylguanine-tRNA biosynthesis. Catalyzes the formation of N(7)-methylguanine at position 46 (m7G46) in tRNA. The protein is tRNA (guanine-N(7)-)-methyltransferase of Bacillus mycoides (strain KBAB4) (Bacillus weihenstephanensis).